We begin with the raw amino-acid sequence, 335 residues long: Aspartate--ammonia ligase (335 aa).

The protein belongs to the class-II aminoacyl-tRNA synthetase family. AsnA subfamily.

It localises to the cytoplasm. The enzyme catalyses L-aspartate + NH4(+) + ATP = L-asparagine + AMP + diphosphate + H(+). The protein operates within amino-acid biosynthesis; L-asparagine biosynthesis; L-asparagine from L-aspartate (ammonia route): step 1/1. The polypeptide is Aspartate--ammonia ligase (Pediococcus pentosaceus (strain ATCC 25745 / CCUG 21536 / LMG 10740 / 183-1w)).